The sequence spans 262 residues: Shikimate dehydrogenase (NADP(+)) (262 aa).

Residues 13–15 and Thr59 contribute to the shikimate site; that span reads SLS. Lys63 functions as the Proton acceptor in the catalytic mechanism. Asp75 provides a ligand contact to NADP(+). Residues Asn84 and Asp99 each contribute to the shikimate site. NADP(+)-binding positions include 122 to 126, 144 to 149, and Met205; these read GAGGA and NRTLEK. Tyr207 lines the shikimate pocket. Gly228 lines the NADP(+) pocket.

It belongs to the shikimate dehydrogenase family. In terms of assembly, homodimer.

The catalysed reaction is shikimate + NADP(+) = 3-dehydroshikimate + NADPH + H(+). It participates in metabolic intermediate biosynthesis; chorismate biosynthesis; chorismate from D-erythrose 4-phosphate and phosphoenolpyruvate: step 4/7. Functionally, involved in the biosynthesis of the chorismate, which leads to the biosynthesis of aromatic amino acids. Catalyzes the reversible NADPH linked reduction of 3-dehydroshikimate (DHSA) to yield shikimate (SA). This chain is Shikimate dehydrogenase (NADP(+)), found in Ignicoccus hospitalis (strain KIN4/I / DSM 18386 / JCM 14125).